Here is a 234-residue protein sequence, read N- to C-terminus: Large ribosomal subunit protein uL1 (234 aa).

The protein belongs to the universal ribosomal protein uL1 family. As to quaternary structure, part of the 50S ribosomal subunit.

In terms of biological role, binds directly to 23S rRNA. The L1 stalk is quite mobile in the ribosome, and is involved in E site tRNA release. Protein L1 is also a translational repressor protein, it controls the translation of the L11 operon by binding to its mRNA. This chain is Large ribosomal subunit protein uL1, found in Edwardsiella ictaluri (strain 93-146).